Here is a 310-residue protein sequence, read N- to C-terminus: tRNA-cytidine(32) 2-sulfurtransferase (310 aa).

Positions 44–49 (SGGKDS) match the PP-loop motif motif. [4Fe-4S] cluster is bound by residues C119, C122, and C210.

The protein belongs to the TtcA family. As to quaternary structure, homodimer. Requires Mg(2+) as cofactor. [4Fe-4S] cluster is required as a cofactor.

It localises to the cytoplasm. The catalysed reaction is cytidine(32) in tRNA + S-sulfanyl-L-cysteinyl-[cysteine desulfurase] + AH2 + ATP = 2-thiocytidine(32) in tRNA + L-cysteinyl-[cysteine desulfurase] + A + AMP + diphosphate + H(+). The protein operates within tRNA modification. Catalyzes the ATP-dependent 2-thiolation of cytidine in position 32 of tRNA, to form 2-thiocytidine (s(2)C32). The sulfur atoms are provided by the cysteine/cysteine desulfurase (IscS) system. In Saccharophagus degradans (strain 2-40 / ATCC 43961 / DSM 17024), this protein is tRNA-cytidine(32) 2-sulfurtransferase.